Here is a 178-residue protein sequence, read N- to C-terminus: Large ribosomal subunit protein uL6 (178 aa).

This sequence belongs to the universal ribosomal protein uL6 family. As to quaternary structure, part of the 50S ribosomal subunit.

In terms of biological role, this protein binds to the 23S rRNA, and is important in its secondary structure. It is located near the subunit interface in the base of the L7/L12 stalk, and near the tRNA binding site of the peptidyltransferase center. The protein is Large ribosomal subunit protein uL6 of Nautilia profundicola (strain ATCC BAA-1463 / DSM 18972 / AmH).